We begin with the raw amino-acid sequence, 62 residues long: Photosystem II reaction center protein Z (62 aa).

2 helical membrane-spanning segments follow: residues Ala-8–Ala-28 and Phe-41–Val-61.

This sequence belongs to the PsbZ family. In terms of assembly, PSII is composed of 1 copy each of membrane proteins PsbA, PsbB, PsbC, PsbD, PsbE, PsbF, PsbH, PsbI, PsbJ, PsbK, PsbL, PsbM, PsbT, PsbY, PsbZ, Psb30/Ycf12, at least 3 peripheral proteins of the oxygen-evolving complex and a large number of cofactors. It forms dimeric complexes.

It localises to the plastid. The protein resides in the chloroplast thylakoid membrane. Functionally, may control the interaction of photosystem II (PSII) cores with the light-harvesting antenna, regulates electron flow through the 2 photosystem reaction centers. PSII is a light-driven water plastoquinone oxidoreductase, using light energy to abstract electrons from H(2)O, generating a proton gradient subsequently used for ATP formation. This is Photosystem II reaction center protein Z from Nephroselmis olivacea (Green alga).